The chain runs to 314 residues: Thymidylate synthase (314 aa).

Residues Arg21 and Arg176–Arg177 each bind dUMP. The active-site Nucleophile is Cys196. DUMP is bound by residues Arg216 to Asp219, Asn227, and His257 to Tyr259. Asp219 contacts (6R)-5,10-methylene-5,6,7,8-tetrahydrofolate. Ser313 is a binding site for (6R)-5,10-methylene-5,6,7,8-tetrahydrofolate.

This sequence belongs to the thymidylate synthase family. Bacterial-type ThyA subfamily. In terms of assembly, homodimer.

The protein localises to the cytoplasm. The catalysed reaction is dUMP + (6R)-5,10-methylene-5,6,7,8-tetrahydrofolate = 7,8-dihydrofolate + dTMP. It functions in the pathway pyrimidine metabolism; dTTP biosynthesis. In terms of biological role, catalyzes the reductive methylation of 2'-deoxyuridine-5'-monophosphate (dUMP) to 2'-deoxythymidine-5'-monophosphate (dTMP) while utilizing 5,10-methylenetetrahydrofolate (mTHF) as the methyl donor and reductant in the reaction, yielding dihydrofolate (DHF) as a by-product. This enzymatic reaction provides an intracellular de novo source of dTMP, an essential precursor for DNA biosynthesis. The sequence is that of Thymidylate synthase from Listeria monocytogenes serotype 4a (strain HCC23).